Here is a 356-residue protein sequence, read N- to C-terminus: tRNA-specific 2-thiouridylase MnmA 2 (356 aa).

Residues 8 to 15 and Met-34 each bind ATP; that span reads GMSGGVDS. The active-site Nucleophile is the Cys-103. The cysteines at positions 103 and 199 are disulfide-linked. Residue Gly-127 coordinates ATP. The segment at 149–151 is interaction with tRNA; that stretch reads KDQ. The active-site Cysteine persulfide intermediate is Cys-199. The tract at residues 305 to 306 is interaction with tRNA; it reads RY.

It belongs to the MnmA/TRMU family.

It localises to the cytoplasm. It catalyses the reaction S-sulfanyl-L-cysteinyl-[protein] + uridine(34) in tRNA + AH2 + ATP = 2-thiouridine(34) in tRNA + L-cysteinyl-[protein] + A + AMP + diphosphate + H(+). Catalyzes the 2-thiolation of uridine at the wobble position (U34) of tRNA, leading to the formation of s(2)U34. The chain is tRNA-specific 2-thiouridylase MnmA 2 from Clostridium botulinum (strain Okra / Type B1).